We begin with the raw amino-acid sequence, 445 residues long: 4-hydroxyphenylpyruvate dioxygenase (445 aa).

Residues 1–11 (MGHQNAAVSEN) are compositionally biased toward polar residues. The segment at 1 to 20 (MGHQNAAVSENQNHDDGAAS) is disordered. 2 consecutive VOC domains span residues 46–192 (RFHH…YVSY) and 223–383 (RLDH…IFTK). Fe cation-binding residues include His-226, His-308, and Glu-394.

It belongs to the 4HPPD family. In terms of assembly, homodimer. Fe cation serves as cofactor.

The protein localises to the cytoplasm. The enzyme catalyses 3-(4-hydroxyphenyl)pyruvate + O2 = homogentisate + CO2. It functions in the pathway amino-acid degradation; L-phenylalanine degradation; acetoacetate and fumarate from L-phenylalanine: step 3/6. Its pathway is cofactor biosynthesis; prenylquinone biosynthesis. Its function is as follows. Catalyzes the conversion of 4-hydroxyphenylpyruvic acid to homogentisic acid, one of the steps in tyrosine catabolism. In Arabidopsis thaliana (Mouse-ear cress), this protein is 4-hydroxyphenylpyruvate dioxygenase (HPD).